The primary structure comprises 64 residues: Large ribosomal subunit protein bL33 (64 aa).

It belongs to the bacterial ribosomal protein bL33 family.

The polypeptide is Large ribosomal subunit protein bL33 (Prochlorococcus marinus (strain MIT 9313)).